A 626-amino-acid polypeptide reads, in one-letter code: Chaperone protein HtpG (626 aa).

The interval 1–339 is a; substrate-binding; it reads MSTNQETRGF…SNDLPLNVSR (339 aa). Residues 340–555 are b; sequence EILQDNKVTA…NDQMTTQMAK (216 aa). A c region spans residues 556–626; that stretch reads LFAAAGQPVP…FIKRVNSLLS (71 aa).

It belongs to the heat shock protein 90 family. In terms of assembly, homodimer.

It localises to the cytoplasm. Molecular chaperone. Has ATPase activity. The protein is Chaperone protein HtpG of Histophilus somni (strain 129Pt) (Haemophilus somnus).